A 310-amino-acid polypeptide reads, in one-letter code: Protoheme IX farnesyltransferase (310 aa).

A run of 9 helical transmembrane segments spans residues 26 to 45 (VMSL…PVTV), 49 to 71 (IALT…NMWW), 95 to 115 (GEAL…LGLA), 118 to 138 (LFAA…YSMW), 147 to 167 (IVIG…VATG), 174 to 194 (LFMF…LALF), 220 to 240 (VLVY…TGIG), 243 to 263 (LYLA…VRIW), and 289 to 309 (LFLH…GLGG).

The protein belongs to the UbiA prenyltransferase family. Protoheme IX farnesyltransferase subfamily. As to quaternary structure, interacts with CtaA.

The protein resides in the cell inner membrane. The catalysed reaction is heme b + (2E,6E)-farnesyl diphosphate + H2O = Fe(II)-heme o + diphosphate. It functions in the pathway porphyrin-containing compound metabolism; heme O biosynthesis; heme O from protoheme: step 1/1. Its function is as follows. Converts heme B (protoheme IX) to heme O by substitution of the vinyl group on carbon 2 of heme B porphyrin ring with a hydroxyethyl farnesyl side group. The polypeptide is Protoheme IX farnesyltransferase (Cereibacter sphaeroides (strain ATCC 17029 / ATH 2.4.9) (Rhodobacter sphaeroides)).